Reading from the N-terminus, the 217-residue chain is Protein GrpE (217 aa).

Residues 1 to 10 are compositionally biased toward basic and acidic residues; it reads MSDHAEHAAD. The tract at residues 1–39 is disordered; sequence MSDHAEHAADAADTDAPEGDDAGGDDGEQAGDDGTSALS. Positions 12–31 are enriched in acidic residues; that stretch reads ADTDAPEGDDAGGDDGEQAG.

It belongs to the GrpE family. Homodimer.

It is found in the cytoplasm. In terms of biological role, participates actively in the response to hyperosmotic and heat shock by preventing the aggregation of stress-denatured proteins, in association with DnaK and GrpE. It is the nucleotide exchange factor for DnaK and may function as a thermosensor. Unfolded proteins bind initially to DnaJ; upon interaction with the DnaJ-bound protein, DnaK hydrolyzes its bound ATP, resulting in the formation of a stable complex. GrpE releases ADP from DnaK; ATP binding to DnaK triggers the release of the substrate protein, thus completing the reaction cycle. Several rounds of ATP-dependent interactions between DnaJ, DnaK and GrpE are required for fully efficient folding. The protein is Protein GrpE of Halobacterium salinarum (strain ATCC 29341 / DSM 671 / R1).